The chain runs to 541 residues: Chaperonin GroEL (541 aa).

Residues 29-32 (TLGP), 86-90 (DGTTT), glycine 413, 480-482 (NAA), and aspartate 496 contribute to the ATP site.

It belongs to the chaperonin (HSP60) family. As to quaternary structure, forms a cylinder of 14 subunits composed of two heptameric rings stacked back-to-back. Interacts with the co-chaperonin GroES.

The protein localises to the cytoplasm. It carries out the reaction ATP + H2O + a folded polypeptide = ADP + phosphate + an unfolded polypeptide.. Its function is as follows. Together with its co-chaperonin GroES, plays an essential role in assisting protein folding. The GroEL-GroES system forms a nano-cage that allows encapsulation of the non-native substrate proteins and provides a physical environment optimized to promote and accelerate protein folding. The sequence is that of Chaperonin GroEL from Gardnerella vaginalis.